Here is a 107-residue protein sequence, read N- to C-terminus: Small ribosomal subunit protein uS17 (107 aa).

This sequence belongs to the universal ribosomal protein uS17 family. Part of the 30S ribosomal subunit.

In terms of biological role, one of the primary rRNA binding proteins, it binds specifically to the 5'-end of 16S ribosomal RNA. The sequence is that of Small ribosomal subunit protein uS17 from Thermotoga petrophila (strain ATCC BAA-488 / DSM 13995 / JCM 10881 / RKU-1).